The sequence spans 1397 residues: Protein RhsC (1397 aa).

Repeat copies occupy residues 330–352 (NTQV…HRHT), 353–374 (GRPE…LNPA), 375–417 (GLSY…EHAD), 418–438 (GSVT…TDAA), 439–460 (GRTT…TTPD), 461–481 (GRAS…TGPD), 482–502 (GLEI…TAPD), 503–525 (GDIT…EDAT), 526–546 (GSRK…TDCS), 547–567 (GYVT…HREE), 568–588 (GLSQ…KDTQ), 589–609 (GHET…IAPD), 610–629 (GSRN…TTQG), 630–650 (GLTR…TSEN), 651–671 (GSHT…TGFD), 672–691 (GRTQ…SEDE), 692–711 (GLVT…RTVN), 712–734 (GETA…HISE), 735–758 (GHRV…LTVH), 808–828 (GDTP…LRSF), 829–850 (GRYE…HLNS), 851–871 (LLSD…ISSP), 872–894 (RQTR…TAAN), 895–930 (LDIR…NRIA), 931–959 (RDAH…VIRT), 960–984 (DDER…TQYA), 985–1019 (EPLV…MSLS), and 1162–1186 (GTTA…HQLQ). Positions 330–1186 (NTQVRSFTYD…LNEENPHQLQ (857 aa)) are 28 X approximate tandem repeats. The interval 1292–1312 (GGQDQRGESKGDGLWGPGKAS) is disordered.

This sequence belongs to the RHS family.

In terms of biological role, rhs elements have a nonessential function. They may play an important role in the natural ecology of the cell. In Escherichia coli (strain K12), this protein is Protein RhsC (rhsC).